The primary structure comprises 102 residues: Parathymosin (102 aa).

Residues 1 to 102 form a disordered region; sequence MSEKSVEAAA…RQKTENGASA (102 aa). Position 2 is an N-acetylserine (serine 2). Serine 2 carries the phosphoserine modification. Lysine 4 is modified (N6-acetyllysine). A phosphoserine mark is found at serine 5 and serine 13. A compositionally biased stretch (basic and acidic residues) spans 13–37; sequence SAKDLKEKKDKVEEKAGRKERKKEV. Lysine 15 carries the post-translational modification N6-acetyllysine. Residues 38-75 are compositionally biased toward acidic residues; that stretch reads VEEEENGAEEEEEETAEDGEDDDEGDEEDEEEEEEEDE. A Phosphothreonine modification is found at threonine 52. Lysine 92 bears the N6-acetyllysine mark.

The protein belongs to the pro/parathymosin family.

Parathymosin may mediate immune function by blocking the effect of prothymosin alpha which confers resistance to certain opportunistic infections. In Rattus norvegicus (Rat), this protein is Parathymosin (Ptms).